A 415-amino-acid chain; its full sequence is Serine hydroxymethyltransferase (415 aa).

(6S)-5,6,7,8-tetrahydrofolate-binding positions include L121 and 125-127; that span reads GHL. K230 is modified (N6-(pyridoxal phosphate)lysine). (6S)-5,6,7,8-tetrahydrofolate is bound by residues E246 and 354–356; that span reads SPF.

It belongs to the SHMT family. Homodimer. Pyridoxal 5'-phosphate serves as cofactor.

It localises to the cytoplasm. The catalysed reaction is (6R)-5,10-methylene-5,6,7,8-tetrahydrofolate + glycine + H2O = (6S)-5,6,7,8-tetrahydrofolate + L-serine. Its pathway is one-carbon metabolism; tetrahydrofolate interconversion. It participates in amino-acid biosynthesis; glycine biosynthesis; glycine from L-serine: step 1/1. Its function is as follows. Catalyzes the reversible interconversion of serine and glycine with tetrahydrofolate (THF) serving as the one-carbon carrier. This reaction serves as the major source of one-carbon groups required for the biosynthesis of purines, thymidylate, methionine, and other important biomolecules. Also exhibits THF-independent aldolase activity toward beta-hydroxyamino acids, producing glycine and aldehydes, via a retro-aldol mechanism. The sequence is that of Serine hydroxymethyltransferase from Bdellovibrio bacteriovorus (strain ATCC 15356 / DSM 50701 / NCIMB 9529 / HD100).